A 118-amino-acid chain; its full sequence is UPF0102 protein RHA1_ro06551 (118 aa).

This sequence belongs to the UPF0102 family.

The protein is UPF0102 protein RHA1_ro06551 of Rhodococcus jostii (strain RHA1).